A 1001-amino-acid polypeptide reads, in one-letter code: Serine/threonine-protein kinase TAO1-B (1001 aa).

The 254-residue stretch at 28-281 (FSDLREIGHG…SDELLKHMFV (254 aa)) folds into the Protein kinase domain. ATP is bound by residues 34 to 42 (IGHGSFGAV) and K57. D151 acts as the Proton acceptor in catalysis. 2 disordered regions span residues 324–435 (PAVE…YRNR) and 567–586 (KEEL…EWLS). Residues 350–370 (SNQSIPSMSISASSQSSSVNS) are compositionally biased toward low complexity. 2 stretches are compositionally biased toward basic and acidic residues: residues 375–388 (SDDK…EGDH) and 577–586 (PKKEKQEWLS). Coiled coils occupy residues 458–651 (SELR…EHAM) and 754–877 (KAVL…EIEA). The interval 911-1001 (SHNPTGGPGP…ISNGSHMSYT (91 aa)) is disordered. The span at 921 to 930 (HWGHPMAGPP) shows a compositional bias: low complexity. Composition is skewed to polar residues over residues 949–967 (GSVQ…NSPQ) and 975–1001 (GGRT…MSYT).

This sequence belongs to the protein kinase superfamily. STE Ser/Thr protein kinase family. STE20 subfamily.

Its subcellular location is the cytoplasm. The enzyme catalyses L-seryl-[protein] + ATP = O-phospho-L-seryl-[protein] + ADP + H(+). It carries out the reaction L-threonyl-[protein] + ATP = O-phospho-L-threonyl-[protein] + ADP + H(+). Its function is as follows. Serine/threonine-protein kinase involved in various processes such as p38/mapk14 stress-activated MAPK cascade, DNA damage response and regulation of cytoskeleton stability. Acts as an activator of the p38/MAPK14 stress-activated MAPK cascade by mediating phosphorylation and subsequent activation of upstream MAP kinase kinases. In response to DNA damage, involved in the G2/M transition DNA damage checkpoint by activating the p38/MAPK14 stress-activated MAPK cascade. In Xenopus laevis (African clawed frog), this protein is Serine/threonine-protein kinase TAO1-B (taok1-b).